Reading from the N-terminus, the 536-residue chain is ATP synthase subunit beta (536 aa).

Residues 1–57 (MVKAVSSSKGAAKVEQKKSAARSGVKKNASKSQASLQDTSSPLKTSSKNAHAKKDVQ) are disordered. The span at 30-49 (SKSQASLQDTSSPLKTSSKN) shows a compositional bias: polar residues. 208–215 (GGAGVGKT) provides a ligand contact to ATP.

The protein belongs to the ATPase alpha/beta chains family. As to quaternary structure, F-type ATPases have 2 components, CF(1) - the catalytic core - and CF(0) - the membrane proton channel. CF(1) has five subunits: alpha(3), beta(3), gamma(1), delta(1), epsilon(1). CF(0) has three main subunits: a(1), b(2) and c(9-12). The alpha and beta chains form an alternating ring which encloses part of the gamma chain. CF(1) is attached to CF(0) by a central stalk formed by the gamma and epsilon chains, while a peripheral stalk is formed by the delta and b chains.

The protein localises to the cell inner membrane. It carries out the reaction ATP + H2O + 4 H(+)(in) = ADP + phosphate + 5 H(+)(out). In terms of biological role, produces ATP from ADP in the presence of a proton gradient across the membrane. The catalytic sites are hosted primarily by the beta subunits. In Bartonella quintana (strain Toulouse) (Rochalimaea quintana), this protein is ATP synthase subunit beta.